A 117-amino-acid polypeptide reads, in one-letter code: Glutamine-rich protein (117 aa).

Over residues Arg27–Gly72 the composition is skewed to low complexity. The interval Arg27–Asn88 is disordered. Residues Arg75 to Gln87 are compositionally biased toward polar residues.

Component of the acid-soluble and acid-insoluble organic matrix of calcified shell layers (at protein level).

It localises to the secreted. This chain is Glutamine-rich protein, found in Haliotis asinina (Donkey's ear abalone).